We begin with the raw amino-acid sequence, 363 residues long: Probable iron/ascorbate oxidoreductase DDB_G0283291 (363 aa).

In terms of domain architecture, Fe2OG dioxygenase spans 197–306; that stretch reads IFNYPSIISS…RISFPLFFDP (110 aa). Positions 230, 232, and 286 each coordinate Fe cation. Residue Arg297 coordinates 2-oxoglutarate.

The protein belongs to the iron/ascorbate-dependent oxidoreductase family. Requires Fe(2+) as cofactor.

This Dictyostelium discoideum (Social amoeba) protein is Probable iron/ascorbate oxidoreductase DDB_G0283291.